The following is a 266-amino-acid chain: UPF0246 protein Pcryo_0542 (266 aa).

The protein belongs to the UPF0246 family.

The protein is UPF0246 protein Pcryo_0542 of Psychrobacter cryohalolentis (strain ATCC BAA-1226 / DSM 17306 / VKM B-2378 / K5).